We begin with the raw amino-acid sequence, 310 residues long: Methionyl-tRNA formyltransferase (310 aa).

109–112 (SLLP) provides a ligand contact to (6S)-5,6,7,8-tetrahydrofolate.

This sequence belongs to the Fmt family.

The enzyme catalyses L-methionyl-tRNA(fMet) + (6R)-10-formyltetrahydrofolate = N-formyl-L-methionyl-tRNA(fMet) + (6S)-5,6,7,8-tetrahydrofolate + H(+). Functionally, attaches a formyl group to the free amino group of methionyl-tRNA(fMet). The formyl group appears to play a dual role in the initiator identity of N-formylmethionyl-tRNA by promoting its recognition by IF2 and preventing the misappropriation of this tRNA by the elongation apparatus. This chain is Methionyl-tRNA formyltransferase, found in Staphylococcus epidermidis (strain ATCC 35984 / DSM 28319 / BCRC 17069 / CCUG 31568 / BM 3577 / RP62A).